A 356-amino-acid polypeptide reads, in one-letter code: Ferrochelatase (356 aa).

Positions 214 and 295 each coordinate Fe cation.

This sequence belongs to the ferrochelatase family.

The protein resides in the cytoplasm. It carries out the reaction heme b + 2 H(+) = protoporphyrin IX + Fe(2+). It participates in porphyrin-containing compound metabolism; protoheme biosynthesis; protoheme from protoporphyrin-IX: step 1/1. In terms of biological role, catalyzes the ferrous insertion into protoporphyrin IX. The protein is Ferrochelatase of Paraburkholderia phymatum (strain DSM 17167 / CIP 108236 / LMG 21445 / STM815) (Burkholderia phymatum).